The sequence spans 273 residues: Putative esterase/lipase 3 (273 aa).

His34 is an active-site residue. Ser100 acts as the Charge relay system in catalysis.

This sequence belongs to the lipase/esterase LIP3/BchO family.

This Mycoplasma genitalium (strain ATCC 33530 / DSM 19775 / NCTC 10195 / G37) (Mycoplasmoides genitalium) protein is Putative esterase/lipase 3.